Consider the following 504-residue polypeptide: Sperm motility kinase 3A (504 aa).

In terms of domain architecture, Protein kinase spans tyrosine 28–valine 276. Residues isoleucine 34–valine 42 and lysine 57 contribute to the ATP site. The Proton acceptor role is filled by aspartate 147. The UBA domain occupies lysine 294 to lysine 334. Disordered stretches follow at residues valine 389–threonine 421 and asparagine 441–glycine 468. Polar residues predominate over residues asparagine 441–threonine 451.

The protein belongs to the protein kinase superfamily. CAMK Ser/Thr protein kinase family. Smok subfamily. In terms of tissue distribution, testis-specific. Expressed in the testis from 22 days postpartum (22 dpp).

It catalyses the reaction L-seryl-[protein] + ATP = O-phospho-L-seryl-[protein] + ADP + H(+). It carries out the reaction L-threonyl-[protein] + ATP = O-phospho-L-threonyl-[protein] + ADP + H(+). In terms of biological role, may play a role in sperm motility, especially in the regulation of flagellar function. The sequence is that of Sperm motility kinase 3A from Mus musculus (Mouse).